The sequence spans 398 residues: Protein RecA (398 aa).

83–90 (GPESSGKT) is a binding site for ATP. The interval 351-398 (AGQKNDKKSKLEEKANAGAGISEASEPDSSAEEDFEEFAPIDIGSLGE) is disordered. Residues 354–365 (KNDKKSKLEEKA) show a composition bias toward basic and acidic residues. Acidic residues predominate over residues 375–389 (SEPDSSAEEDFEEFA).

It belongs to the RecA family.

The protein resides in the cytoplasm. Its function is as follows. Can catalyze the hydrolysis of ATP in the presence of single-stranded DNA, the ATP-dependent uptake of single-stranded DNA by duplex DNA, and the ATP-dependent hybridization of homologous single-stranded DNAs. It interacts with LexA causing its activation and leading to its autocatalytic cleavage. This Ruminococcus albus (strain ATCC 27210 / DSM 20455 / JCM 14654 / NCDO 2250 / 7) protein is Protein RecA.